Reading from the N-terminus, the 113-residue chain is Large ribosomal subunit protein P2 (113 aa).

The segment at 62–113 (LASVPSGGAGGAAASGGAAAAGGSAQAEAAPEAAKEEEKEESDEDMGFGLFD) is disordered. A compositionally biased stretch (low complexity) spans 76-93 (SGGAAAAGGSAQAEAAPE). S103 carries the phosphoserine modification.

The protein belongs to the eukaryotic ribosomal protein P1/P2 family. As to quaternary structure, P1 and P2 exist as dimers at the large ribosomal subunit.

In terms of biological role, plays an important role in the elongation step of protein synthesis. The protein is Large ribosomal subunit protein P2 (ALTA5) of Alternaria alternata (Alternaria rot fungus).